A 1140-amino-acid chain; its full sequence is uncharacterized protein (1140 aa).

2 helical membrane passes run 8-28 (FLLF…SAFT) and 1098-1118 (IAIT…SGVV).

The protein to M.pneumoniae MPN_375 (in the N-terminal section), M.pneumoniae MPN_374 (in the central section) and M.pneumoniae MPN_373 (in the C-terminal section).

It is found in the cell membrane. This is an uncharacterized protein from Mycoplasma pneumoniae (strain ATCC 29342 / M129 / Subtype 1) (Mycoplasmoides pneumoniae).